The sequence spans 414 residues: ORC1-type DNA replication protein 1 (414 aa).

Residues 70–74, Tyr213, and Arg225 contribute to the ATP site; that span reads TGKTA.

This sequence belongs to the CDC6/cdc18 family.

Its function is as follows. Involved in regulation of DNA replication. This Methanosarcina acetivorans (strain ATCC 35395 / DSM 2834 / JCM 12185 / C2A) protein is ORC1-type DNA replication protein 1 (cdc6-1).